The sequence spans 466 residues: Catalase ifgD (466 aa).

The interval 1 to 22 (MAPNYAKKCPVMGKAPSSGHSS) is disordered. His-48 is a catalytic residue. A heme-binding site is contributed by Tyr-337.

Belongs to the catalase family. It depends on heme as a cofactor.

Its pathway is alkaloid biosynthesis; ergot alkaloid biosynthesis. Its function is as follows. Catalase; part of the gene cluster that mediates the biosynthesis of isofumigaclavines, fungal ergot alkaloids. The tryptophan dimethylallyltransferase ifgA catalyzes the first step of ergot alkaloid biosynthesis by condensing dimethylallyl diphosphate (DMAP) and tryptophan to form 4-dimethylallyl-L-tryptophan. The second step is catalyzed by the methyltransferase ifgB that methylates 4-dimethylallyl-L-tryptophan in the presence of S-adenosyl-L-methionine, resulting in the formation of N-methyl-dimethylallyl-L-tryptophan. The catalase ifgD and the FAD-dependent oxidoreductase ifgC then transform N-methyl-dimethylallyl-L-tryptophan to chanoclavine-I which is further oxidized by ifgE in the presence of NAD(+), resulting in the formation of chanoclavine-I aldehyde. The chanoclavine-I aldehyde reductases ifgG and/or fgaOx3 reduce chanoclavine-I aldehyde to dihydrochanoclavine-I aldehyde that spontaneously dehydrates to form 6,8-dimethyl-6,7-didehydroergoline. The festuclavine dehydrogenases ifgF1 and/or ifgF2 then catalyze the reduction of 6,8-dimethyl-6,7-didehydroergoline to form festuclavine. Hydrolysis of festuclavine by a yet undetermined cytochrome P450 monooxygenase (called ifgH) then leads to the formation of isofumigaclavine B which is in turn acetylated by ifgI to isofumigaclavine A. Penicillium roqueforti has interestingly at least two sets of genes for the consumption of chanoclavine-I aldehyde on three different loci, the OYEs ifgG/fgaOx3 and the festuclavine synthase homologs ifgF1/ifgF2. The reason for the duplication of these genes is unclear, probably to ensure the conversion of chanoclavine-I aldehyde by differential gene expression under various environmental conditions. This Penicillium roqueforti (strain FM164) protein is Catalase ifgD.